Here is a 1596-residue protein sequence, read N- to C-terminus: Protein son of sevenless (1596 aa).

Residues 248 to 434 (TYEETVKELI…HPLHCDLEKV (187 aa)) form the DH domain. In terms of domain architecture, PH spans 480–588 (EFIREDSLSK…WMADLLMVIT (109 aa)). Residues 637 to 792 (GVPMIKGATL…SVLKIVQRKN (156 aa)) form the N-terminal Ras-GEF domain. The 238-residue stretch at 829–1066 (HPLELARQLT…YNESLRIEPR (238 aa)) folds into the Ras-GEF domain. Disordered stretches follow at residues 1073–1105 (KFPR…LSNS), 1175–1212 (RNTS…AHVW), 1235–1291 (EHLP…TAST), 1340–1392 (RAVP…NHST), and 1465–1596 (PLPI…TNEE). Low complexity predominate over residues 1096–1105 (TNSSSKLSNS). Composition is skewed to polar residues over residues 1175–1195 (RNTS…NNGE) and 1280–1291 (MQNSPTHSTAST). Residues 1352–1366 (ERTESCADMAQKRQA) are compositionally biased toward basic and acidic residues. The span at 1469–1489 (SPAASSSTTTSPLTPAMSPMS) shows a compositional bias: low complexity. Residues 1526 to 1542 (HHQHHATHLPHHPHQHH) show a composition bias toward basic residues. Residues Ser1550 and Ser1551 each carry the phosphoserine modification.

May form a complex with sevenless and DRK.

Its function is as follows. Promotes the exchange of Ras-bound GDP by GTP. Functions in signaling pathways initiated by the sevenless and epidermal growth factor receptor tyrosine kinases; implies a role for the ras pathway in neuronal development. The protein is Protein son of sevenless (Sos) of Drosophila melanogaster (Fruit fly).